The following is a 189-amino-acid chain: Elongation factor P-like protein (189 aa).

It belongs to the elongation factor P family.

This Vibrio atlanticus (strain LGP32) (Vibrio splendidus (strain Mel32)) protein is Elongation factor P-like protein.